Reading from the N-terminus, the 489-residue chain is Probable cytosol aminopeptidase (489 aa).

Residues Lys260 and Asp265 each contribute to the Mn(2+) site. Residue Lys272 is part of the active site. The Mn(2+) site is built by Asp283, Asp342, and Glu344. Residue Arg346 is part of the active site.

The protein belongs to the peptidase M17 family. Mn(2+) serves as cofactor.

The protein resides in the cytoplasm. The catalysed reaction is Release of an N-terminal amino acid, Xaa-|-Yaa-, in which Xaa is preferably Leu, but may be other amino acids including Pro although not Arg or Lys, and Yaa may be Pro. Amino acid amides and methyl esters are also readily hydrolyzed, but rates on arylamides are exceedingly low.. It carries out the reaction Release of an N-terminal amino acid, preferentially leucine, but not glutamic or aspartic acids.. In terms of biological role, presumably involved in the processing and regular turnover of intracellular proteins. Catalyzes the removal of unsubstituted N-terminal amino acids from various peptides. This Alcanivorax borkumensis (strain ATCC 700651 / DSM 11573 / NCIMB 13689 / SK2) protein is Probable cytosol aminopeptidase.